The chain runs to 953 residues: Catenin alpha-2 (953 aa).

A Phosphothreonine modification is found at Thr632. Ser640, Ser651, and Ser901 each carry phosphoserine. Basic and acidic residues predominate over residues Glu912 to Thr927. The segment at Glu912 to Ser939 is disordered. A compositionally biased stretch (basic residues) spans Arg928–Ile938. At Ser939 the chain carries Phosphoserine.

The protein belongs to the vinculin/alpha-catenin family. Interacts with CDH1 and CDH2. Interacts with ZNF639; recruits CTNNA2 to the nucleus. Interacts with F-actin. In terms of tissue distribution, expressed in neural tissues, with strongest expression in fetal and adult brain. Expressed in the developing cortical plate and marginal zone of 20-week-old human fetal brain.

The protein resides in the cell membrane. It localises to the cytoplasm. It is found in the cytoskeleton. Its subcellular location is the cell junction. The protein localises to the adherens junction. The protein resides in the cell projection. It localises to the axon. It is found in the nucleus. May function as a linker between cadherin adhesion receptors and the cytoskeleton to regulate cell-cell adhesion and differentiation in the nervous system. Required for proper regulation of cortical neuronal migration and neurite growth. It acts as a negative regulator of Arp2/3 complex activity and Arp2/3-mediated actin polymerization. It thereby suppresses excessive actin branching which would impair neurite growth and stability. Regulates morphological plasticity of synapses and cerebellar and hippocampal lamination during development. Functions in the control of startle modulation. The polypeptide is Catenin alpha-2 (CTNNA2) (Homo sapiens (Human)).